The primary structure comprises 159 residues: Glucosamine 6-phosphate N-acetyltransferase (159 aa).

The residue at position 2 (Ser2) is an N-acetylserine. D-glucosamine 6-phosphate is bound by residues Thr28, 86–89, and 98–100; these read KIIH and EDI. One can recognise an N-acetyltransferase domain in the interval 28–159; that stretch reads TTVGTITPES…NAGVEMQIRK (132 aa). Acetyl-CoA-binding positions include 100–102 and 108–113; these read IAV and GQGLGK. D-glucosamine 6-phosphate is bound by residues 129–130 and Asp134; that span reads YK. An acetyl-CoA-binding site is contributed by 143–145; that stretch reads YEK. Residue Arg158 participates in D-glucosamine 6-phosphate binding.

This sequence belongs to the acetyltransferase family. GNA1 subfamily. As to quaternary structure, homodimer.

The catalysed reaction is D-glucosamine 6-phosphate + acetyl-CoA = N-acetyl-D-glucosamine 6-phosphate + CoA + H(+). It participates in nucleotide-sugar biosynthesis; UDP-N-acetyl-alpha-D-glucosamine biosynthesis; N-acetyl-alpha-D-glucosamine 1-phosphate from alpha-D-glucosamine 6-phosphate (route I): step 1/2. In Saccharomyces cerevisiae (strain ATCC 204508 / S288c) (Baker's yeast), this protein is Glucosamine 6-phosphate N-acetyltransferase (GNA1).